The sequence spans 122 residues: High-potential iron-sulfur protein (122 aa).

Positions 1-37 are cleaved as a signal peptide; the sequence is MSDKPISKSRRDAVKVMLGTAAAIPMINLVGFGTARA. The [4Fe-4S] cluster site is built by C80, C83, C100, and C114.

This sequence belongs to the high-potential iron-sulfur protein (HiPIP) family. As to quaternary structure, homodimer.

It localises to the periplasm. Specific class of high-redox-potential 4Fe-4S ferredoxins. Functions in anaerobic electron transport in most purple and in some other photosynthetic bacteria and in at least one genus (Paracoccus) of halophilic, denitrifying bacteria. This Allochromatium vinosum (strain ATCC 17899 / DSM 180 / NBRC 103801 / NCIMB 10441 / D) (Chromatium vinosum) protein is High-potential iron-sulfur protein (hip).